Consider the following 683-residue polypeptide: DNA ligase (683 aa).

NAD(+)-binding positions include 35–39 (DTEYD), 84–85 (SL), and E116. The N6-AMP-lysine intermediate role is filled by K118. Residues R139, E176, K293, and K317 each coordinate NAD(+). Zn(2+) contacts are provided by C419, C422, C437, and C443. The 82-residue stretch at 602–683 (AGPQLLAGKT…LMKLLAKGVE (82 aa)) folds into the BRCT domain.

Belongs to the NAD-dependent DNA ligase family. LigA subfamily. Requires Mg(2+) as cofactor. Mn(2+) is required as a cofactor.

The enzyme catalyses NAD(+) + (deoxyribonucleotide)n-3'-hydroxyl + 5'-phospho-(deoxyribonucleotide)m = (deoxyribonucleotide)n+m + AMP + beta-nicotinamide D-nucleotide.. Functionally, DNA ligase that catalyzes the formation of phosphodiester linkages between 5'-phosphoryl and 3'-hydroxyl groups in double-stranded DNA using NAD as a coenzyme and as the energy source for the reaction. It is essential for DNA replication and repair of damaged DNA. This chain is DNA ligase, found in Dechloromonas aromatica (strain RCB).